The following is a 970-amino-acid chain: Transposase for insertion sequence element IS1071 in transposon Tn5271 (970 aa).

The protein belongs to the transposase 7 family.

Required for transposition of transposon Tn5271. The chain is Transposase for insertion sequence element IS1071 in transposon Tn5271 from Comamonas testosteroni (Pseudomonas testosteroni).